We begin with the raw amino-acid sequence, 151 residues long: Cytochrome c oxidase-assembly factor COX23, mitochondrial (151 aa).

The N-terminal 10 residues, 1–10 (MEKPSPTRRQ), are a transit peptide targeting the mitochondrion. Residues 1-86 (MEKPSPTRRQ…QYYPDDPENP (86 aa)) are disordered. Polar residues predominate over residues 7–18 (TRRQTSSLSTIS). Low complexity predominate over residues 19 to 51 (NGMTMTNDNRDTTNTNSGSTSSNNSQPSSSSTP). The CHCH domain maps to 101 to 143 (YDPCEESSKLSFQCLERNDYDRSKCQEYFDAYRECKKQWLTAR). Short sequence motifs (cx9C motif) lie at residues 104-114 (CEESSKLSFQC) and 125-135 (CQEYFDAYREC). 2 disulfide bridges follow: Cys-104-Cys-135 and Cys-114-Cys-125.

Belongs to the COX23 family.

The protein localises to the cytoplasm. The protein resides in the mitochondrion intermembrane space. Functionally, required for the assembly of cytochrome c oxidase. The sequence is that of Cytochrome c oxidase-assembly factor COX23, mitochondrial (COX23) from Saccharomyces cerevisiae (strain ATCC 204508 / S288c) (Baker's yeast).